Consider the following 321-residue polypeptide: Gap junction delta-2 protein (321 aa).

Over 1-19 (MGEWTILERLLEAAVQQHS) the chain is Cytoplasmic. A helical membrane pass occupies residues 20–42 (TMIGRILLTVVVIFRILIVAIVG). Residues 43–75 (ETVYDDEQTMFVCNTLQPGCNQACYDRAFPISH) lie on the Extracellular side of the membrane. The helical transmembrane segment at 76–98 (IRYWVFQIIMVCTPSLCFITYSV) threads the bilayer. Residues 99–197 (HQSAKQRERR…KLRRQEGISR (99 aa)) are Cytoplasmic-facing. Residues 117-141 (DRDPPESMGGPGGTGGGGSGGGKRE) form a disordered region. Positions 125–137 (GGPGGTGGGGSGG) are enriched in gly residues. The helical transmembrane segment at 198–220 (FYIIQVVFRNALEIGFLVGQYFL) threads the bilayer. Residues 221–252 (YGFSVPGLYECDRYPCIKEVECYVSRPTEKTV) lie on the Extracellular side of the membrane. A helical membrane pass occupies residues 253–275 (FLVFMFAVSGICVVLNLAELNHL). Residues 276–321 (GWRKIKLAVRGAQAKRKSVYEIRNKDLPRVSVPNFGRTQSSDSAYV) lie on the Cytoplasmic side of the membrane.

The protein belongs to the connexin family. Delta-type subfamily. As to quaternary structure, a connexon is composed of a hexamer of connexins.

It localises to the cell membrane. The protein resides in the cell junction. The protein localises to the gap junction. One gap junction consists of a cluster of closely packed pairs of transmembrane channels, the connexons, through which materials of low MW diffuse from one cell to a neighboring cell. The protein is Gap junction delta-2 protein (GJD2) of Bos taurus (Bovine).